The following is a 412-amino-acid chain: 2,3-bisphosphoglycerate-independent phosphoglycerate mutase (412 aa).

It belongs to the BPG-independent phosphoglycerate mutase family. A-PGAM subfamily.

It catalyses the reaction (2R)-2-phosphoglycerate = (2R)-3-phosphoglycerate. The protein operates within carbohydrate degradation; glycolysis; pyruvate from D-glyceraldehyde 3-phosphate: step 3/5. Its function is as follows. Catalyzes the interconversion of 2-phosphoglycerate and 3-phosphoglycerate. In Methanobrevibacter smithii (strain ATCC 35061 / DSM 861 / OCM 144 / PS), this protein is 2,3-bisphosphoglycerate-independent phosphoglycerate mutase.